The following is a 200-amino-acid chain: Interferon lambda-1 (200 aa).

Residues 1-19 (MAAAWTVVLVTLVLGLAVA) form the signal peptide. N65 is a glycosylation site (N-linked (GlcNAc...) asparagine). A disulfide bridge connects residues C68 and C164.

It belongs to the lambda interferon family.

The protein localises to the secreted. In terms of biological role, cytokine with antiviral, antitumour and immunomodulatory activities. Plays a critical role in the antiviral host defense, predominantly in the epithelial tissues. Acts as a ligand for the heterodimeric class II cytokine receptor composed of IL10RB and IFNLR1, and receptor engagement leads to the activation of the JAK/STAT signaling pathway resulting in the expression of IFN-stimulated genes (ISG), which mediate the antiviral state. Has a restricted receptor distribution and therefore restricted targets: is primarily active in epithelial cells and this cell type-selective action is because of the epithelial cell-specific expression of its receptor IFNLR1. Exerts an immunomodulatory effect by up-regulating MHC class I antigen expression. The sequence is that of Interferon lambda-1 (IFNL1) from Homo sapiens (Human).